The chain runs to 405 residues: Tryptophan synthase beta chain (405 aa).

The residue at position 95 (lysine 95) is an N6-(pyridoxal phosphate)lysine.

It belongs to the TrpB family. As to quaternary structure, tetramer of two alpha and two beta chains. Requires pyridoxal 5'-phosphate as cofactor.

It carries out the reaction (1S,2R)-1-C-(indol-3-yl)glycerol 3-phosphate + L-serine = D-glyceraldehyde 3-phosphate + L-tryptophan + H2O. Its pathway is amino-acid biosynthesis; L-tryptophan biosynthesis; L-tryptophan from chorismate: step 5/5. The beta subunit is responsible for the synthesis of L-tryptophan from indole and L-serine. The sequence is that of Tryptophan synthase beta chain (trpB) from Pseudomonas putida (Arthrobacter siderocapsulatus).